The sequence spans 490 residues: Cardiolipin synthase A (490 aa).

2 helical membrane passes run 20-40 and 49-69; these read LGLL…HAVL and IAWA…YLVF. PLD phosphodiesterase domains follow at residues 229–256 and 403–430; these read VNFR…GVEY and QPGF…DNRS. Residues H234, K236, D241, H408, K410, and D415 contribute to the active site.

The protein belongs to the phospholipase D family. Cardiolipin synthase subfamily. ClsA sub-subfamily.

It is found in the cell inner membrane. It catalyses the reaction 2 a 1,2-diacyl-sn-glycero-3-phospho-(1'-sn-glycerol) = a cardiolipin + glycerol. Functionally, catalyzes the reversible phosphatidyl group transfer from one phosphatidylglycerol molecule to another to form cardiolipin (CL) (diphosphatidylglycerol) and glycerol. The protein is Cardiolipin synthase A of Pseudomonas aeruginosa (strain LESB58).